Consider the following 883-residue polypeptide: Valine--tRNA ligase (883 aa).

A 'HIGH' region motif is present at residues 50-60; the sequence is PNVTGKLHMGH. Residues 527 to 531 carry the 'KMSKS' region motif; it reads KMSKS. Residue K530 participates in ATP binding. Positions 811-883 form a coiled coil; that stretch reads LNELIDLDEE…KQRLEQLQRA (73 aa). The disordered stretch occupies residues 859-883; it reads QRTKRSDFEDQLTSTKQRLEQLQRA.

Belongs to the class-I aminoacyl-tRNA synthetase family. ValS type 1 subfamily. In terms of assembly, monomer.

The protein localises to the cytoplasm. It carries out the reaction tRNA(Val) + L-valine + ATP = L-valyl-tRNA(Val) + AMP + diphosphate. Its function is as follows. Catalyzes the attachment of valine to tRNA(Val). As ValRS can inadvertently accommodate and process structurally similar amino acids such as threonine, to avoid such errors, it has a 'posttransfer' editing activity that hydrolyzes mischarged Thr-tRNA(Val) in a tRNA-dependent manner. In Lacticaseibacillus casei (Lactobacillus casei), this protein is Valine--tRNA ligase.